A 443-amino-acid polypeptide reads, in one-letter code: Leucine-rich repeat-containing protein 17 (443 aa).

The signal sequence occupies residues 1-15; the sequence is MRIVAILLLFCLCRA. The segment at 20-48 is disordered; sequence KSSPGVLRSQGNPSRSHGRGGRRGSSPVK. LRR repeat units follow at residues 84-105, 108-129, and 132-153; these read DLLH…MFAK, RLKS…AFFG, and KLTT…AFIY. The region spanning 165–216 is the LRRCT 1 domain; the sequence is NPWHCTCELETLISMLQIPRNRNLGNYAKCGSPPALRNKKLLQLKPQELCDE. An LRRNT domain is found at 229–270; sequence SGIPAVIRPEADSTLCHNYVFPIQTLDCKRKELKKVPSNIPP. LRR repeat units follow at residues 271–292, 295–316, and 319–342; these read DIVK…EFED, ELKK…AFLG, and HLEE…EDLY. The region spanning 352–404 is the LRRCT 2 domain; sequence NPWRCDYSIHYLYYWLKHHYNVHYNGLECKTPEEYKGWSVGKYVRSYYEECPK.

Expressed in osteoblasts, spleen, lung and heart.

It is found in the secreted. The protein localises to the extracellular space. In terms of biological role, involved in bone homeostasis. Acts as a negative regulator of RANKL-induced osteoclast precursor differentiation from bone marrow precursors. This is Leucine-rich repeat-containing protein 17 (Lrrc17) from Mus musculus (Mouse).